A 200-amino-acid chain; its full sequence is UPF0329 protein ECU06_1670 (200 aa).

It belongs to the UPF0329 family.

This Encephalitozoon cuniculi (strain GB-M1) (Microsporidian parasite) protein is UPF0329 protein ECU06_1670.